Here is a 305-residue protein sequence, read N- to C-terminus: Homoserine kinase (305 aa).

ATP is bound at residue 95–105 (PHGRGLGSSSA).

Belongs to the GHMP kinase family. Homoserine kinase subfamily.

It is found in the cytoplasm. It catalyses the reaction L-homoserine + ATP = O-phospho-L-homoserine + ADP + H(+). The protein operates within amino-acid biosynthesis; L-threonine biosynthesis; L-threonine from L-aspartate: step 4/5. Catalyzes the ATP-dependent phosphorylation of L-homoserine to L-homoserine phosphate. In Streptomyces avermitilis (strain ATCC 31267 / DSM 46492 / JCM 5070 / NBRC 14893 / NCIMB 12804 / NRRL 8165 / MA-4680), this protein is Homoserine kinase.